The chain runs to 331 residues: DNA-directed RNA polymerase subunit alpha (331 aa).

The alpha N-terminal domain (alpha-NTD) stretch occupies residues 1–232 (MQGTFRDFLK…DQLSVFVDLE (232 aa)). An alpha C-terminal domain (alpha-CTD) region spans residues 247–331 (VDPILLRPID…AGLGEDRVVG (85 aa)).

Belongs to the RNA polymerase alpha chain family. As to quaternary structure, homodimer. The RNAP catalytic core consists of 2 alpha, 1 beta, 1 beta' and 1 omega subunit. When a sigma factor is associated with the core the holoenzyme is formed, which can initiate transcription.

The catalysed reaction is RNA(n) + a ribonucleoside 5'-triphosphate = RNA(n+1) + diphosphate. DNA-dependent RNA polymerase catalyzes the transcription of DNA into RNA using the four ribonucleoside triphosphates as substrates. This is DNA-directed RNA polymerase subunit alpha from Alkalilimnicola ehrlichii (strain ATCC BAA-1101 / DSM 17681 / MLHE-1).